The chain runs to 398 residues: MKFEQSHVLKELPKQFFASLVQKVNRKLAEGHDVINLGQGNPDQPTPEHIVEEMKRAVADPENHKYSSFRGSYRLKSAAAAFYKREYGIDLDPETEVAVLFGGKAGLVELPQCLLNPGDTILVPDPGYPDYWSGVTLAKAKMEMMPLVKDRAFLPDYSSITAEIREQAKLMYLNYPNNPTGAVATSEFFEDTVRFAAENGICVVHDFAYGAVGFDGCKPLSFLQTEGAKDIGIEIYTLSKTYNMAGWRVGFAVGNASVIEAINLYQDHMFVSLFRATQEAAAEALLADQTCVAEQNARYESRRNAWITACREIGWDVTAPAGSFFAWLPVPEGYTSEQFSDLLLEKANVAVAAGNGFGEYGEGYVRVGLLTSEERLKEAAYRIGKLNLFTQKSIDKTL.

N6-(pyridoxal phosphate)lysine is present on Lys-240.

It belongs to the class-I pyridoxal-phosphate-dependent aminotransferase family. MtnE subfamily. Pyridoxal 5'-phosphate is required as a cofactor.

The enzyme catalyses 4-methylsulfanyl-2-oxobutanoate + L-glutamine = 2-oxoglutaramate + L-methionine. The protein operates within amino-acid biosynthesis; L-methionine biosynthesis via salvage pathway; L-methionine from S-methyl-5-thio-alpha-D-ribose 1-phosphate: step 6/6. Its function is as follows. Involved in the methylthioribose (MTR) recycling pathway. Catalyzes the formation of methionine from 2-keto-4-methylthiobutyrate (KMTB). In Bacillus subtilis (strain 168), this protein is L-glutamine--4-(methylsulfanyl)-2-oxobutanoate aminotransferase.